A 416-amino-acid polypeptide reads, in one-letter code: MSLKVFLQAGVACAALSLAGAAGASAEPLKIALVETLSGPQASTGLLYRAAVLYQLGKINEAGGFNGEKIQILEYDNQGGPVGAADRVKAAIADGAQIIVQGSSSAVAGQITEDVRKYNLRNKGKEVLYLNLGAEALELTGSKCHFYHFRFSPNAAIRFKTVAQGMKDKGILGERAYSINQNYSWGVDVENTVVANAKEIGYEVVDKTLHEVNKIQDFSPYVAKIQAANVDTVFTGNWSNDLLLLMKAASGAGLKAKFATSFLDQPGNIGNAGAIAEGHIVSTPFNPEANGEASMAFAEDYKKVTGHYPSYVEPAAVFGLQLFGEALKNVKPGEGKINTTDIALAIENASVKTPMGDYSMRSDDHQAKFPMVVQEVSKKARIKADGTEYGFLPFKTFTGDESIDPVQESCSMKRPG.

A signal peptide spans M1–A26.

It belongs to the leucine-binding protein family.

Component of an amino-acid transport system. In Brucella abortus (strain 2308), this protein is Leu/Ile/Val-binding protein homolog 4.